Here is a 432-residue protein sequence, read N- to C-terminus: Protein distal antenna-related (432 aa).

Positions 15–66 (TRGKRPLRNLTPNDKVRAIQRIHNGETKASVSRDLGVPESTLRGWCKNEQKL) constitute an HTH psq-type domain. Positions 42 to 62 (KASVSRDLGVPESTLRGWCKN) form a DNA-binding region, H-T-H motif. Disordered regions lie at residues 195-221 (ESADTDIKSPQSTTDITDTAREENSTK) and 401-432 (SCASVSSRNNSRSQTPDKSTATSIACLSDGEQ). 2 stretches are compositionally biased toward polar residues: residues 202–211 (KSPQSTTDIT) and 401–425 (SCASVSSRNNSRSQTPDKSTATSIA).

In terms of assembly, interacts with itself, dan, ey and dac to form a complex (or complexes) containing the RD factors.

It is found in the nucleus. Probable transcription factor with a role in the retinal determination (RD) network. Regulates ato expression and is required for normal R8 induction and differentiation. Danr appears to repress Dan expression, but Dan is required for Danr expression anterior to the morphogenetic furrow (MF). Dan and Danr lie downstream of so and require dac function for highest levels of expression. Contributes to differentiation of antenna-specific characteristics; effector gene that acts downstream of homothorax (hth), Distal-less (Dll), cut (ct) and spineless (ss) genes to control differentiation of distal antennal structures. The sequence is that of Protein distal antenna-related from Drosophila pseudoobscura pseudoobscura (Fruit fly).